The primary structure comprises 113 residues: Large ribosomal subunit protein uL24 (113 aa).

The protein belongs to the universal ribosomal protein uL24 family. As to quaternary structure, part of the 50S ribosomal subunit.

Its function is as follows. One of two assembly initiator proteins, it binds directly to the 5'-end of the 23S rRNA, where it nucleates assembly of the 50S subunit. One of the proteins that surrounds the polypeptide exit tunnel on the outside of the subunit. The protein is Large ribosomal subunit protein uL24 of Chlamydia abortus (strain DSM 27085 / S26/3) (Chlamydophila abortus).